A 506-amino-acid polypeptide reads, in one-letter code: Dual specificity protein kinase shkC (506 aa).

Positions 1-21 (MDSGLGSSYPEERSGPPEIRP) are disordered. Positions 10-21 (PEERSGPPEIRP) are enriched in basic and acidic residues. The Protein kinase domain occupies 24-284 (INFEELIGTG…IISALDHVII (261 aa)). Residues 30–38 (IGTGSFGKV) and lysine 51 each bind ATP. Aspartate 147 serves as the catalytic Proton acceptor. Residues 396 to 488 (WFHGDLDTTE…KLDSQLGVPN (93 aa)) form the SH2 domain.

It belongs to the protein kinase superfamily. TKL Ser/Thr protein kinase family. SH2 domain-containing protein kinase subfamily.

Its subcellular location is the membrane. The catalysed reaction is L-seryl-[protein] + ATP = O-phospho-L-seryl-[protein] + ADP + H(+). It carries out the reaction L-threonyl-[protein] + ATP = O-phospho-L-threonyl-[protein] + ADP + H(+). Required for proper chemotaxis and phagocytosis; proper spatiotemporal control of F-actin levels in chemotaxing cells. Negative regulator of the PI3K (phosphatidylinositol 3 kinase) pathway. Predominantly phosphorylates serines and threonines and tyrosines at a lower level. The protein is Dual specificity protein kinase shkC (shkC) of Dictyostelium discoideum (Social amoeba).